The primary structure comprises 354 residues: uncharacterized protein (354 aa).

This sequence belongs to the asfivirus B354L family.

This is an uncharacterized protein from Ornithodoros (relapsing fever ticks).